A 790-amino-acid chain; its full sequence is Nuclear cap-binding protein subunit 1 (790 aa).

Residues 1–26 (MSRRRHSYENDGGQPHKRRKTSDANE) form a disordered region. Residues 3-20 (RRRHSYENDGGQPHKRRK) carry the Nuclear localization signal motif. Ser-7 is modified (phosphoserine). At Thr-21 the chain carries Phosphothreonine. Phosphoserine occurs at positions 22 and 201. The 213-residue stretch at 28-240 (EDHLESLICK…CLWAQIQKLK (213 aa)) folds into the MIF4G domain. The residue at position 204 (Lys-204) is an N6-acetyllysine. Positions 643–713 (STIRKMNKHV…SEQKNLFLVI (71 aa)) form a coiled coil. Residues 666–685 (LARQHKRRSDDDDRSSDRKD) form a disordered region. Lys-684 participates in a covalent cross-link: Glycyl lysine isopeptide (Lys-Gly) (interchain with G-Cter in SUMO2). At Lys-698 the chain carries N6-acetyllysine.

The protein belongs to the NCBP1 family. In terms of assembly, component of the nuclear cap-binding complex (CBC), a heterodimer composed of NCBP1/CBP80 and NCBP2/CBP20 that interacts with m7GpppG-capped RNA. Found in a U snRNA export complex containing PHAX/RNUXA, NCBP1/CBP80, NCBP2/CBP20, RAN, XPO1 and m7G-capped RNA. Identified in a IGF2BP1-dependent mRNP granule complex containing untranslated mRNAs. Interacts with PHAX/RNUXA, SRRT/ARS2, EIF4G2, IGF2BP1, HNRNPF, HNRNPH1, KIAA0427/CTIF, PARN, DROSHA, UPF1 and ALYREF/THOC4. May interact with EIF4G1; the interaction is however controversial. The large PER complex involved in the repression of transcriptional termination is composed of at least PER2, CDK9, DDX5, DHX9, NCBP1/CBP80 and POLR2A (active). Component of an alternative nuclear cap-binding complex (CBC) composed of NCBP1/CBP80 and NCBP3. Interacts with METTL3. Interacts with ZFC3H1 in a RNase-insensitive manner. Interacts with MTREX. Interacts with TASOR. Interacts with DHX34; the interaction is RNA-dependent. Interacts with KPNA3. Post-translationally, dephosphorylated at Thr-21 by the PNUTS-PP1 complex during RNA polymerase II transcription pause-release. In terms of tissue distribution, expressed in the spermatogonia, spermatocytes and granular cells within the cerebellum.

It localises to the nucleus. It is found in the cytoplasm. Its function is as follows. Component of the cap-binding complex (CBC), which binds cotranscriptionally to the 5'-cap of pre-mRNAs and is involved in various processes such as pre-mRNA splicing, translation regulation, nonsense-mediated mRNA decay, RNA-mediated gene silencing (RNAi) by microRNAs (miRNAs) and mRNA export. The CBC complex is involved in mRNA export from the nucleus via its interaction with ALYREF/THOC4/ALY, leading to the recruitment of the mRNA export machinery to the 5'-end of mRNA and to mRNA export in a 5' to 3' direction through the nuclear pore. The CBC complex is also involved in mediating U snRNA and intronless mRNAs export from the nucleus. The CBC complex is essential for a pioneer round of mRNA translation, before steady state translation when the CBC complex is replaced by cytoplasmic cap-binding protein eIF4E. The pioneer round of mRNA translation mediated by the CBC complex plays a central role in nonsense-mediated mRNA decay (NMD), NMD only taking place in mRNAs bound to the CBC complex, but not on eIF4E-bound mRNAs. The CBC complex enhances NMD in mRNAs containing at least one exon-junction complex (EJC) via its interaction with UPF1, promoting the interaction between UPF1 and UPF2. The CBC complex is also involved in 'failsafe' NMD, which is independent of the EJC complex, while it does not participate in Staufen-mediated mRNA decay (SMD). During cell proliferation, the CBC complex is also involved in microRNAs (miRNAs) biogenesis via its interaction with SRRT/ARS2 and is required for miRNA-mediated RNA interference. The CBC complex also acts as a negative regulator of PARN, thereby acting as an inhibitor of mRNA deadenylation. In the CBC complex, NCBP1/CBP80 does not bind directly capped RNAs (m7GpppG-capped RNA) but is required to stabilize the movement of the N-terminal loop of NCBP2/CBP20 and lock the CBC into a high affinity cap-binding state with the cap structure. Associates with NCBP3 to form an alternative cap-binding complex (CBC) which plays a key role in mRNA export and is particularly important in cellular stress situations such as virus infections. The conventional CBC with NCBP2 binds both small nuclear RNA (snRNA) and messenger (mRNA) and is involved in their export from the nucleus whereas the alternative CBC with NCBP3 does not bind snRNA and associates only with mRNA thereby playing a role only in mRNA export. NCBP1/CBP80 is required for cell growth and viability. The protein is Nuclear cap-binding protein subunit 1 (Ncbp1) of Mus musculus (Mouse).